Consider the following 77-residue polypeptide: Cysteine-rich protein 1 (77 aa).

The LIM zinc-binding domain maps to 2-63; that stretch reads PKCPKCSKEV…HPCYAAMFGP (62 aa). 2 positions are modified to N6-acetyllysine: Lys-9 and Lys-22. Position 68 is an omega-N-methylarginine (Arg-68).

In terms of biological role, seems to have a role in zinc absorption and may function as an intracellular zinc transport protein. This is Cysteine-rich protein 1 (CRIP1) from Bos taurus (Bovine).